The chain runs to 218 residues: Adenylate kinase (218 aa).

10 to 15 (GAGKGT) contributes to the ATP binding site. An NMP region spans residues 30 to 59 (STGDMLRAAVKAGTPLGIAAKKIMDEGGLV). Residues Thr31, Arg36, 57-59 (GLV), 85-88 (GFPR), and Gln92 each bind AMP. The tract at residues 122–159 (GRRVHPASGRTYHVKFNPPKVAGKDDLTGEELIQRDDD) is LID. Residues Arg123 and 132–133 (TY) each bind ATP. Positions 156 and 167 each coordinate AMP. Residue Gly203 participates in ATP binding.

The protein belongs to the adenylate kinase family. As to quaternary structure, monomer.

Its subcellular location is the cytoplasm. It carries out the reaction AMP + ATP = 2 ADP. Its pathway is purine metabolism; AMP biosynthesis via salvage pathway; AMP from ADP: step 1/1. Functionally, catalyzes the reversible transfer of the terminal phosphate group between ATP and AMP. Plays an important role in cellular energy homeostasis and in adenine nucleotide metabolism. In Janthinobacterium sp. (strain Marseille) (Minibacterium massiliensis), this protein is Adenylate kinase.